The chain runs to 459 residues: MARALRVPVALWLLGLCWSLAKAHPLARAPELGHGVEGGNVAKPDPEVTERCSDGWGFDATTLDEHGNMLFLKGEFVWKGHAWARQLISERWKDAPSPVDAAFRYDRNSVLLIKGDKFWVYPPEKGEEYPKLLQEKFPGIPFPLDAAVECHRGECSHEGVFFFQGNHTWFWDFSTKTIKKRSWPAVGNCSSAIRWLNRYYCFRGNKFLRFDPVTGEVNSTYPRDVRDYFMSCPNRGHAHRNATQHMDKRCSPHLVLSALLSDNHSATYAFSENHYWRLDSSRDGWHSWRIEHLWPQGPSTVDAAFLWDKKLYLIQGTQVYIFLTRAGYTLVKDYPKQLEKEFGSPDGVCLHSVDAAFTCPGSSQLYIMAGQKLWRLDLNLGAQATWTELPWLHTKVDGALCTEKSLGPHSCSANGLGLYLVQGPNLYCYKDVEELSKTKDLPQAQRMNSLLGCAPHQHS.

The N-terminal stretch at 1–23 is a signal peptide; it reads MARALRVPVALWLLGLCWSLAKA. Disulfide bonds link Cys-52/Cys-232, Cys-150/Cys-155, and Cys-189/Cys-201. Hemopexin repeat units follow at residues 55 to 95, 96 to 140, 141 to 185, and 186 to 232; these read GWGF…WKDA, PSPV…FPGI, PFPL…SWPA, and VGNC…FMSC. Heme is bound at residue His-81. His-151 contributes to the heme binding site. The N-linked (GlcNAc...) asparagine glycan is linked to Asn-188. Residue Asn-218 is glycosylated (N-linked (GlcNAc...) asparagine). Heme is bound at residue His-237. N-linked (GlcNAc...) asparagine glycosylation is present at Asn-241. Cystine bridges form between Cys-250–Cys-453, Cys-359–Cys-401, and Cys-411–Cys-428. Hemopexin repeat units follow at residues 252 to 297, 298 to 345, 350 to 389, and 393 to 444; these read PHLV…WPQG, PSTV…FGSP, LHSV…WTEL, and HTKV…LPQA. His-286 provides a ligand contact to heme.

The protein belongs to the hemopexin family.

The protein resides in the secreted. In terms of biological role, binds heme and transports it to the liver for breakdown and iron recovery, after which the free hemopexin returns to the circulation. This Bos taurus (Bovine) protein is Hemopexin (HPX).